The sequence spans 232 residues: Large ribosomal subunit protein uL1 (232 aa).

Belongs to the universal ribosomal protein uL1 family. Part of the 50S ribosomal subunit.

Binds directly to 23S rRNA. The L1 stalk is quite mobile in the ribosome, and is involved in E site tRNA release. Functionally, protein L1 is also a translational repressor protein, it controls the translation of the L11 operon by binding to its mRNA. The polypeptide is Large ribosomal subunit protein uL1 (Bordetella bronchiseptica (strain ATCC BAA-588 / NCTC 13252 / RB50) (Alcaligenes bronchisepticus)).